We begin with the raw amino-acid sequence, 265 residues long: MVTTLSYTQRAEAHPSPLAKRLFTVMEQKKSNLCASIDVKTTDEFLSLVDTLGPYICLVKTHIDIIDDFSFEGTIVPLKKLAEKHNFLIFEDRKFADIGKTVKNQYASGVFKIAQWSDITNAHGVTGAGIVKGLKEAAQETTDEPRGLLMLAELSSKGSLATGEYTKQTVDIAKTDKDFVIGFIAQRDMGGHDEGFDWLIMTPGVGLDDKGDGLGQQYRGVDEVVAGGSDIIIVGRGLFGKGRDPAVEGERYRSAGWNAYLKRCQ.

Substrate is bound by residues D38, 60-62, 92-101, Y218, and R236; these read KTH and DRKFADIGKT. K94 (proton donor) is an active-site residue.

This sequence belongs to the OMP decarboxylase family.

It catalyses the reaction orotidine 5'-phosphate + H(+) = UMP + CO2. The protein operates within pyrimidine metabolism; UMP biosynthesis via de novo pathway; UMP from orotate: step 2/2. In Cyberlindnera fabianii (Yeast), this protein is Orotidine 5'-phosphate decarboxylase (URA3).